A 356-amino-acid chain; its full sequence is Phosphate acyltransferase (356 aa).

This sequence belongs to the PlsX family. Homodimer. Probably interacts with PlsY.

The protein localises to the cytoplasm. It catalyses the reaction a fatty acyl-[ACP] + phosphate = an acyl phosphate + holo-[ACP]. It participates in lipid metabolism; phospholipid metabolism. Catalyzes the reversible formation of acyl-phosphate (acyl-PO(4)) from acyl-[acyl-carrier-protein] (acyl-ACP). This enzyme utilizes acyl-ACP as fatty acyl donor, but not acyl-CoA. The protein is Phosphate acyltransferase of Escherichia coli (strain K12 / DH10B).